The following is a 446-amino-acid chain: Probable D-serine dehydratase (446 aa).

Lysine 116 is subject to N6-(pyridoxal phosphate)lysine.

The protein belongs to the serine/threonine dehydratase family. DsdA subfamily. The cofactor is pyridoxal 5'-phosphate.

The enzyme catalyses D-serine = pyruvate + NH4(+). The polypeptide is Probable D-serine dehydratase (Bacillus cereus (strain ZK / E33L)).